Here is a 220-residue protein sequence, read N- to C-terminus: 1-Cys peroxiredoxin B (220 aa).

The Thioredoxin domain maps to 4–165 (LTLGDVVPDL…VLRATDALLT (162 aa)). The active-site Cysteine sulfenic acid (-SOH) intermediate is Cys-46. The Bipartite nuclear localization signal signature appears at 195 to 218 (KARFPAGFETAQLPSNKCYLRFTQ).

This sequence belongs to the peroxiredoxin family. Prx6 subfamily.

It localises to the nucleus. The protein resides in the cytoplasm. The catalysed reaction is a hydroperoxide + [thioredoxin]-dithiol = an alcohol + [thioredoxin]-disulfide + H2O. Thiol-specific peroxidase that catalyzes the reduction of hydrogen peroxide and organic hydroperoxides to water and alcohols, respectively. Seems to contribute to the inhibition of germination during stress. In Oryza sativa subsp. indica (Rice), this protein is 1-Cys peroxiredoxin B.